Reading from the N-terminus, the 123-residue chain is Small ribosomal subunit protein uS13c (123 aa).

The tract at residues 99 to 123 is disordered; it reads GQRTRSNARTRRGAKKTVAGKKLAK. A compositionally biased stretch (basic residues) spans 100–123; it reads QRTRSNARTRRGAKKTVAGKKLAK.

Belongs to the universal ribosomal protein uS13 family. Part of the 30S ribosomal subunit.

It is found in the plastid. The protein resides in the chloroplast. Its function is as follows. Located at the top of the head of the 30S subunit, it contacts several helices of the 16S rRNA. The protein is Small ribosomal subunit protein uS13c of Cyanidioschyzon merolae (strain NIES-3377 / 10D) (Unicellular red alga).